Consider the following 338-residue polypeptide: DNA-directed RNA polymerase subunit alpha (338 aa).

Residues 1–226 (MLIAQRPTLT…ELFGLTRELN (226 aa)) form an alpha N-terminal domain (alpha-NTD) region. The alpha C-terminal domain (alpha-CTD) stretch occupies residues 243 to 338 (YAESLGTPVE…DDDYAETEQY (96 aa)). Positions 319–338 (AAAEAYDEANDDDYAETEQY) are disordered. The segment covering 323 to 338 (AYDEANDDDYAETEQY) has biased composition (acidic residues).

It belongs to the RNA polymerase alpha chain family. As to quaternary structure, homodimer. The RNAP catalytic core consists of 2 alpha, 1 beta, 1 beta' and 1 omega subunit. When a sigma factor is associated with the core the holoenzyme is formed, which can initiate transcription.

The catalysed reaction is RNA(n) + a ribonucleoside 5'-triphosphate = RNA(n+1) + diphosphate. Its function is as follows. DNA-dependent RNA polymerase catalyzes the transcription of DNA into RNA using the four ribonucleoside triphosphates as substrates. The sequence is that of DNA-directed RNA polymerase subunit alpha from Cutibacterium acnes (strain DSM 16379 / KPA171202) (Propionibacterium acnes).